Consider the following 557-residue polypeptide: Tripeptidyl-peptidase 1 (557 aa).

The first 16 residues, 1-16, serve as a signal peptide directing secretion; sequence MRVAVFVLSFIWLVNG. Residues 17-190 constitute a propeptide, removed in mature form; it reads ELLEADQDAV…WEGARQAILG (174 aa). N-linked (GlcNAc...) asparagine glycosylation is present at N53. Residues C107 and C118 are joined by a disulfide bond. Positions 194-557 constitute a Peptidase S53 domain; it reads GVTPAVIRNR…YPVFLASLMD (364 aa). 2 N-linked (GlcNAc...) asparagine glycosylation sites follow: N205 and N216. Active-site charge relay system residues include E266 and D270. N-linked (GlcNAc...) asparagine glycosylation is found at N280, N307, and N438. Intrachain disulfides connect C359/C521 and C517/C532. S470 functions as the Charge relay system in the catalytic mechanism. Residues D512 and V513 each contribute to the Ca(2+) site. D538 serves as a coordination point for Ca(2+).

Requires Ca(2+) as cofactor. Activated by autocatalytic proteolytical processing.

It is found in the lysosome. The catalysed reaction is Release of an N-terminal tripeptide from a polypeptide, but also has endopeptidase activity.. Functionally, lysosomal serine protease with tripeptidyl-peptidase I activity. May act as a non-specific lysosomal peptidase which generates tripeptides from the breakdown products produced by lysosomal proteinases. Requires substrates with an unsubstituted N-terminus. The chain is Tripeptidyl-peptidase 1 from Danio rerio (Zebrafish).